The primary structure comprises 632 residues: Golgin subfamily A member 8J (632 aa).

The disordered stretch occupies residues 1–76 (MAEETQHNKL…TSSATLKDLE (76 aa)). 2 coiled-coil regions span residues 86 to 154 (LDSR…HMKR) and 220 to 421 (LKVQ…SLMA). Basic and acidic residues-rich tracts occupy residues 352 to 362 (KQEERIQEQHK) and 427 to 440 (HGGE…EEAP). Disordered stretches follow at residues 352–377 (KQEE…FKEP), 423–452 (PGEG…DPES), and 496–524 (LSEP…DEGE). A compositionally biased stretch (gly residues) spans 508 to 520 (LGGGHHQAGAQGG).

It belongs to the GOLGA8 family.

The protein is Golgin subfamily A member 8J (GOLGA8J) of Homo sapiens (Human).